Consider the following 386-residue polypeptide: Heat-inducible transcription repressor HrcA (386 aa).

It belongs to the HrcA family.

Functionally, negative regulator of class I heat shock genes (grpE-dnaK-dnaJ and groELS operons). Prevents heat-shock induction of these operons. This Chlamydia caviae (strain ATCC VR-813 / DSM 19441 / 03DC25 / GPIC) (Chlamydophila caviae) protein is Heat-inducible transcription repressor HrcA.